Consider the following 491-residue polypeptide: UDP-N-acetylmuramate--L-alanine ligase (491 aa).

Gly-126–Thr-132 contributes to the ATP binding site.

Belongs to the MurCDEF family.

The protein localises to the cytoplasm. The enzyme catalyses UDP-N-acetyl-alpha-D-muramate + L-alanine + ATP = UDP-N-acetyl-alpha-D-muramoyl-L-alanine + ADP + phosphate + H(+). The protein operates within cell wall biogenesis; peptidoglycan biosynthesis. In terms of biological role, cell wall formation. This chain is UDP-N-acetylmuramate--L-alanine ligase, found in Klebsiella pneumoniae subsp. pneumoniae (strain ATCC 700721 / MGH 78578).